We begin with the raw amino-acid sequence, 359 residues long: Insulin gene enhancer protein ISL-2 (359 aa).

LIM zinc-binding domains follow at residues 25–86 (AMCV…RLFG) and 87–149 (IKCA…LLER). A disordered region spans residues 151-190 (AAGSPRSPGPLPGARGLHLPDAGSGRQPSLRTHVHKQAEK). Phosphoserine occurs at positions 154 and 157. The homeobox DNA-binding region spans 191-250 (TTRVRTVLNEKQLHTLRTCYAANPRPDALMKEQLVEMTGLSPRVIRVWFQNKRCKDKKKS). The LIM-binding domain (LID) stretch occupies residues 272–301 (GTPLVAGSPIRHENAVQGSAVEVQTYQPPW). Serine 279 carries the phosphoserine modification. Positions 326–336 (ESGSLGNSSGS) are enriched in low complexity. Residues 326–359 (ESGSLGNSSGSDVTSLSSQLPDTPNSMVPSPVET) are disordered. Positions 337 to 359 (DVTSLSSQLPDTPNSMVPSPVET) are enriched in polar residues.

In terms of assembly, interacts with LHX4.

Its subcellular location is the nucleus. Its function is as follows. Transcriptional factor that defines subclasses of motoneurons that segregate into columns in the spinal cord and select distinct axon pathways. The chain is Insulin gene enhancer protein ISL-2 (Isl2) from Mus musculus (Mouse).